The primary structure comprises 117 residues: Hydrogenase maturation factor HypA (117 aa).

Position 2 (histidine 2) interacts with Ni(2+). Zn(2+)-binding residues include cysteine 73, cysteine 76, cysteine 89, and cysteine 92.

It belongs to the HypA/HybF family.

Its function is as follows. Involved in the maturation of [NiFe] hydrogenases. Required for nickel insertion into the metal center of the hydrogenase. The polypeptide is Hydrogenase maturation factor HypA (Pelodictyon phaeoclathratiforme (strain DSM 5477 / BU-1)).